The chain runs to 130 residues: Insulin-like growth factor 1 (130 aa).

The first 25 residues, 1–25 (MHAVSSSHLFYLAFCLLVLTSSATA), serve as a signal peptide directing secretion. The b stretch occupies residues 26–54 (GPETLCGAELVDALQFVCGDRGFYFNKPT). 3 disulfide bridges follow: Cys-31–Cys-73, Cys-43–Cys-86, and Cys-72–Cys-77. The c stretch occupies residues 55 to 66 (GYGSSSRRAPQT). An a region spans residues 67–87 (GIVDECCFRSCDLRRLEMYCA). Positions 88-95 (PLKPAKSA) are d. Positions 96-130 (RSVRAQRHTDMPKTQKEVHLKNASRGSAGNKNYRM) are cleaved as a propeptide — e peptide. Residues 97–130 (SVRAQRHTDMPKTQKEVHLKNASRGSAGNKNYRM) form a disordered region. Residues 102-115 (RHTDMPKTQKEVHL) are compositionally biased toward basic and acidic residues. Over residues 119 to 130 (SRGSAGNKNYRM) the composition is skewed to polar residues.

It belongs to the insulin family. Forms a ternary complex with IGFR1 and ITGAV:ITGB3. Forms a ternary complex with IGFR1 and ITGA6:ITGB4. Forms a ternary complex with IGFBP3 and ALS.

It localises to the secreted. Its function is as follows. The insulin-like growth factors, isolated from plasma, are structurally and functionally related to insulin but have a much higher growth-promoting activity. May be a physiological regulator of [1-14C]-2-deoxy-D-glucose (2DG) transport and glycogen synthesis in osteoblasts. Stimulates glucose transport in bone-derived osteoblastic (PyMS) cells and is effective at much lower concentrations than insulin, not only regarding glycogen and DNA synthesis but also with regard to enhancing glucose uptake. May play a role in synapse maturation. Ca(2+)-dependent exocytosis of IGF1 is required for sensory perception of smell in the olfactory bulb. Acts as a ligand for IGF1R. Binds to the alpha subunit of IGF1R, leading to the activation of the intrinsic tyrosine kinase activity which autophosphorylates tyrosine residues in the beta subunit thus initiating a cascade of down-stream signaling events leading to activation of the PI3K-AKT/PKB and the Ras-MAPK pathways. Binds to integrins ITGAV:ITGB3 and ITGA6:ITGB4. Its binding to integrins and subsequent ternary complex formation with integrins and IGFR1 are essential for IGF1 signaling. Induces the phosphorylation and activation of IGFR1, MAPK3/ERK1, MAPK1/ERK2 and AKT1. As part of the MAPK/ERK signaling pathway, acts as a negative regulator of apoptosis in cardiomyocytes via promotion of STUB1/CHIP-mediated ubiquitination and degradation of ICER-type isoforms of CREM. The protein is Insulin-like growth factor 1 of Cavia porcellus (Guinea pig).